Here is a 161-residue protein sequence, read N- to C-terminus: Transcriptional repressor NrdR (161 aa).

A zinc finger spans residues 3-34 (CPYCGARDARVIDSRELNGGESIRRRRECIAC). The ATP-cone domain maps to 49-139 (LMVVKRDGRR…VYRRFADLED (91 aa)).

This sequence belongs to the NrdR family. Zn(2+) serves as cofactor.

Functionally, negatively regulates transcription of bacterial ribonucleotide reductase nrd genes and operons by binding to NrdR-boxes. The protein is Transcriptional repressor NrdR of Thermomicrobium roseum (strain ATCC 27502 / DSM 5159 / P-2).